Here is a 662-residue protein sequence, read N- to C-terminus: uncharacterized protein (662 aa).

Disordered regions lie at residues 1 to 94, 107 to 237, 288 to 328, 406 to 440, and 506 to 580; these read MSQR…NENN, DHNN…VKYH, ETTS…TPSA, QSSFLNKPTNNTETPTTTTTTTTTTTTTPSQPIQM, and QNSI…MVSP. Over residues 25–49 the composition is skewed to low complexity; that stretch reads TTTTTPTPTTTTTTTSSLSSSTSST. Positions 77-87 are enriched in basic and acidic residues; sequence DNIKLDNEKTF. Residues 109–161 are compositionally biased toward low complexity; sequence NNNNNNNNNNNNNNNNNNNNNNNNNNNNNNNNNNNNNNNNNNNNNNNNNNNNN. Polar residues predominate over residues 162–176; that stretch reads DTQKGTNKNENNCTD. Positions 183 to 196 are enriched in low complexity; sequence STSTTSSSETGSST. The span at 203–212 shows a compositional bias: polar residues; sequence KTPQSCLKKS. Residues 213-224 are compositionally biased toward low complexity; it reads NNNNNDNNNNNN. The span at 226–235 shows a compositional bias: basic residues; it reads KTPRSTKKVK. Low complexity-rich tracts occupy residues 288–308, 413–434, 515–526, and 535–575; these read ETTSVTSTTSTATTTTTTPIP, PTNNTETPTTTTTTTTTTTTTP, PTKSSSSTSIQQ, and NINN…NNNN.

This is an uncharacterized protein from Dictyostelium discoideum (Social amoeba).